A 729-amino-acid polypeptide reads, in one-letter code: Sodium-dependent neutral amino acid transporter B(0)AT2 (729 aa).

Residues 1 to 69 lie on the Cytoplasmic side of the membrane; the sequence is MPKNSKVVKR…ERPAWNSKLQ (69 aa). Phosphoserine is present on residues Ser-25 and Ser-55. The segment at 42–61 is disordered; sequence DVQEEKDTDAEDGSEADDER. The span at 43 to 59 shows a compositional bias: acidic residues; the sequence is VQEEKDTDAEDGSEADD. A run of 3 helical transmembrane segments spans residues 70 to 90, 98 to 117, and 142 to 162; these read YILA…FPYL, AYLL…LFFL, and GIGF…NVII. Residues 163 to 225 are Extracellular-facing; sequence GWTLFYFSQS…SSISDSGGLN (63 aa). N-linked (GlcNAc...) asparagine glycosylation is present at Asn-187. Transmembrane regions (helical) follow at residues 226 to 244 and 253 to 270; these read WKMT…LAMI and IMYF…CFLI. A glycan (N-linked (GlcNAc...) asparagine) is linked at Asn-276. 2 helical membrane-spanning segments follow: residues 306-323 and 335-356; these read VFFA…FSSY and VLVS…FAVL. The Extracellular portion of the chain corresponds to 357–452; that stretch reads GFKANIVNEK…FIAFTEAMTH (96 aa). Residues Asn-383 and Asn-394 are each glycosylated (N-linked (GlcNAc...) asparagine). The next 5 membrane-spanning stretches (helical) occupy residues 453-472, 496-514, 530-550, 571-592, and 620-642; these read FPAS…NLGL, ILTV…IFVQ, TLPL…VYGI, YMWK…IVNM, and VVCF…IRRC. Over 643 to 729 the chain is Cytoplasmic; the sequence is NLIDDSSGNL…DMPDMPESDL (87 aa). A phosphoserine mark is found at Ser-687, Ser-699, and Ser-701.

The protein belongs to the sodium:neurotransmitter symporter (SNF) (TC 2.A.22) family. SLC6A15 subfamily. In terms of tissue distribution, significant expressed in brain, lung and kidney. In brain, mainly expressed int the cortex, the cerebellum and the brain stem.

The protein resides in the membrane. It carries out the reaction L-pipecolate(in) + Na(+)(in) = L-pipecolate(out) + Na(+)(out). The enzyme catalyses L-leucine(in) + Na(+)(in) = L-leucine(out) + Na(+)(out). The catalysed reaction is L-isoleucine(in) + Na(+)(in) = L-isoleucine(out) + Na(+)(out). It catalyses the reaction L-methionine(in) + Na(+)(in) = L-methionine(out) + Na(+)(out). It carries out the reaction L-proline(in) + Na(+)(in) = L-proline(out) + Na(+)(out). The enzyme catalyses L-alanine(in) + Na(+)(in) = L-alanine(out) + Na(+)(out). The catalysed reaction is L-asparagine(in) + Na(+)(in) = L-asparagine(out) + Na(+)(out). It catalyses the reaction L-valine(in) + Na(+)(in) = L-valine(out) + Na(+)(out). It carries out the reaction L-cysteine(in) + Na(+)(in) = L-cysteine(out) + Na(+)(out). The enzyme catalyses L-glutamine(in) + Na(+)(in) = L-glutamine(out) + Na(+)(out). The catalysed reaction is L-serine(in) + Na(+)(in) = L-serine(out) + Na(+)(out). It catalyses the reaction L-threonine(in) + Na(+)(in) = L-threonine(out) + Na(+)(out). It carries out the reaction L-phenylalanine(in) + Na(+)(in) = L-phenylalanine(out) + Na(+)(out). In terms of biological role, functions as a sodium-dependent neutral amino acid transporter. Exhibits preference for methionine and for the branched-chain amino acids, particularly leucine, valine and isoleucine. Can also transport low-affinity substrates such as alanine, phenylalanine, glutamine and pipecolic acid. Mediates the saturable, pH-sensitive and electrogenic cotransport of proline and sodium ions with a stoichiometry of 1:1. May have a role as transporter for neurotransmitter precursors into neurons. In contrast to other members of the neurotransmitter transporter family, does not appear to be chloride-dependent. In Mus musculus (Mouse), this protein is Sodium-dependent neutral amino acid transporter B(0)AT2 (Slc6a15).